The sequence spans 132 residues: Large ribosomal subunit protein uL14 (132 aa).

The protein belongs to the universal ribosomal protein uL14 family. As to quaternary structure, part of the 50S ribosomal subunit. Forms a cluster with proteins L3 and L24e, part of which may contact the 16S rRNA in 2 intersubunit bridges.

Binds to 23S rRNA. Forms part of two intersubunit bridges in the 70S ribosome. The chain is Large ribosomal subunit protein uL14 from Methanobrevibacter smithii (strain ATCC 35061 / DSM 861 / OCM 144 / PS).